The sequence spans 257 residues: Ciliary microtubule associated protein 1B (257 aa).

3 STPGR repeats span residues 103–129 (PGPGSYSPENATKATYLSPPAFTLSAR), 182–207 (PGPGTYQVVDPCVYKHKGPQYSMTGR), and 218–243 (PGPGAHYPEMVCFTRAKAPSFSFGIR).

Belongs to the CIMAP family.

Its subcellular location is the cell projection. The protein resides in the cilium. It localises to the flagellum. In Danio rerio (Zebrafish), this protein is Ciliary microtubule associated protein 1B (cimap1b).